The chain runs to 466 residues: Replication termination factor 1 (466 aa).

DNA-binding domain regions lie at residues 94–249 (RDYT…LRRK) and 250–421 (YNPF…KKTL). 2 consecutive HTH myb-type domains span residues 251–304 (NPFK…QPGE) and 305–363 (INRS…SRDI). 2 DNA-binding regions (H-T-H motif) span residues 278 to 300 (WSLI…RDYI) and 336 to 359 (WSLI…YTLI).

The protein localises to the nucleus. Mediates site-specific replication termination at the polar replication barrier RTS1, a barrier which ensures that replication of the mat1 locus in S.pombe occurs in the centromere-proximal direction. The sequence is that of Replication termination factor 1 (rtf1) from Schizosaccharomyces pombe (strain 972 / ATCC 24843) (Fission yeast).